Consider the following 138-residue polypeptide: Protein NrdI (138 aa).

This sequence belongs to the NrdI family.

Its function is as follows. Probably involved in ribonucleotide reductase function. The chain is Protein NrdI from Mycobacterium leprae (strain TN).